A 102-amino-acid chain; its full sequence is Small ribosomal subunit protein uS10 (102 aa).

It belongs to the universal ribosomal protein uS10 family. In terms of assembly, part of the 30S ribosomal subunit.

Its function is as follows. Involved in the binding of tRNA to the ribosomes. This chain is Small ribosomal subunit protein uS10, found in Staphylococcus saprophyticus subsp. saprophyticus (strain ATCC 15305 / DSM 20229 / NCIMB 8711 / NCTC 7292 / S-41).